We begin with the raw amino-acid sequence, 110 residues long: Thiosulfate sulfurtransferase GlpE (110 aa).

The region spanning 17 to 105 (RENGAQVVDI…WRSVYPADTS (89 aa)) is the Rhodanese domain. Cys-65 (cysteine persulfide intermediate) is an active-site residue.

It belongs to the GlpE family.

The protein resides in the cytoplasm. It carries out the reaction thiosulfate + hydrogen cyanide = thiocyanate + sulfite + 2 H(+). It catalyses the reaction thiosulfate + [thioredoxin]-dithiol = [thioredoxin]-disulfide + hydrogen sulfide + sulfite + 2 H(+). Its function is as follows. Transferase that catalyzes the transfer of sulfur from thiosulfate to thiophilic acceptors such as cyanide or dithiols. May function in a CysM-independent thiosulfate assimilation pathway by catalyzing the conversion of thiosulfate to sulfite, which can then be used for L-cysteine biosynthesis. The chain is Thiosulfate sulfurtransferase GlpE from Pseudomonas paraeruginosa (strain DSM 24068 / PA7) (Pseudomonas aeruginosa (strain PA7)).